Here is a 179-residue protein sequence, read N- to C-terminus: GTP-dependent dephospho-CoA kinase (179 aa).

GTP is bound by residues Asp55, Val57, Asp74, Lys76, and Glu128.

Belongs to the GTP-dependent DPCK family.

The enzyme catalyses 3'-dephospho-CoA + GTP = GDP + CoA + H(+). The protein operates within cofactor biosynthesis; coenzyme A biosynthesis. In terms of biological role, catalyzes the GTP-dependent phosphorylation of the 3'-hydroxyl group of dephosphocoenzyme A to form coenzyme A (CoA). This chain is GTP-dependent dephospho-CoA kinase, found in Saccharolobus islandicus (strain M.16.4 / Kamchatka #3) (Sulfolobus islandicus).